Consider the following 259-residue polypeptide: 3-oxo-5-alpha-steroid 4-dehydrogenase 1 (259 aa).

The next 5 membrane-spanning stretches (helical) occupy residues 12–29, 86–106, 111–131, 151–171, and 209–229; these read LLAA…AVFA, ILLA…PFLM, PMPL…GYLQ, FLIG…SDHI, and YALA…FCFL.

It belongs to the steroid 5-alpha reductase family. As to expression, liver and prostate (at a low level).

The protein resides in the microsome membrane. The protein localises to the endoplasmic reticulum membrane. It catalyses the reaction a 3-oxo-5alpha-steroid + NADP(+) = a 3-oxo-Delta(4)-steroid + NADPH + H(+). It carries out the reaction androst-4-ene-3,17-dione + NADPH + H(+) = 5alpha-androstan-3,17-dione + NADP(+). The catalysed reaction is 5alpha-pregnane-3,20-dione + NADP(+) = progesterone + NADPH + H(+). The enzyme catalyses 17beta-hydroxy-5alpha-androstan-3-one + NADP(+) = testosterone + NADPH + H(+). In terms of biological role, converts testosterone into 5-alpha-dihydrotestosterone and progesterone or corticosterone into their corresponding 5-alpha-3-oxosteroids. It plays a central role in sexual differentiation and androgen physiology. The polypeptide is 3-oxo-5-alpha-steroid 4-dehydrogenase 1 (Homo sapiens (Human)).